We begin with the raw amino-acid sequence, 405 residues long: Dynactin subunit 2 (405 aa).

Residues 1–25 form a disordered region; that stretch reads MADPKYADLPGIARNEPDVYETSDL. Ala2 is modified (N-acetylalanine). Residue Tyr6 is modified to Phosphotyrosine. Position 85 is a phosphoserine (Ser85). Residue Tyr88 is modified to Phosphotyrosine. The stretch at 105–132 forms a coiled coil; that stretch reads YQRLLHEVQELTTEVEKIKMTVKESATE. Thr136 is modified (phosphothreonine). The disordered stretch occupies residues 187–207; the sequence is KNTKGAGSGGKTTSGSPPDSS. At Ser324 the chain carries Phosphoserine.

The protein belongs to the dynactin subunit 2 family. As to quaternary structure, subunit of dynactin, a multiprotein complex part of a tripartite complex with dynein and a adapter, such as BICDL1, BICD2 or HOOK3. The dynactin complex is built around ACTR1A/ACTB filament and consists of an actin-related filament composed of a shoulder domain, a pointed end and a barbed end. Its length is defined by its flexible shoulder domain. The soulder is composed of 2 DCTN1 subunits, 4 DCTN2 and 2 DCTN3. The 4 DCNT2 (via N-terminus) bind the ACTR1A filament and act as molecular rulers to determine the length. The pointed end is important for binding dynein-dynactin cargo adapters and consists of 4 subunits: ACTR10, DCNT4, DCTN5 and DCTN6. The barbed end is composed of a CAPZA1:CAPZB heterodimers, which binds ACTR1A/ACTB filament and dynactin and stabilizes dynactin. Interacts with BICD2 and CEP135. Interacts with DYNAP. Interacts with ECPAS. Interacts with MAPRE1.

It localises to the cytoplasm. Its subcellular location is the cytoskeleton. The protein localises to the microtubule organizing center. The protein resides in the centrosome. It is found in the membrane. Functionally, part of the dynactin complex that activates the molecular motor dynein for ultra-processive transport along microtubules. In the dynactin soulder domain, binds the ACTR1A filament and acts as a molecular ruler to determine the length. Modulates cytoplasmic dynein binding to an organelle, and plays a role in prometaphase chromosome alignment and spindle organization during mitosis. Involved in anchoring microtubules to centrosomes. May play a role in synapse formation during brain development. This Sus scrofa (Pig) protein is Dynactin subunit 2 (DCTN2).